Consider the following 245-residue polypeptide: Membrane-associated progesterone-binding protein 4 (245 aa).

Residues 6–26 form a helical membrane-spanning segment; the sequence is RFLLSPFVGVTFIVVLVSLYF. A Cytochrome b5 heme-binding domain is found at 39–138; it reads KRLFSAEELA…RTYTPVGKLV (100 aa). The tract at residues 45–138 is steroid-binding; the sequence is EELALYNGTD…RTYTPVGKLV (94 aa).

This sequence belongs to the cytochrome b5 family. MAPR subfamily.

The protein resides in the membrane. This is Membrane-associated progesterone-binding protein 4 from Arabidopsis thaliana (Mouse-ear cress).